A 225-amino-acid polypeptide reads, in one-letter code: Tryptophan synthase beta chain (225 aa).

It belongs to the TrpB family. Tetramer of two alpha and two beta chains. It depends on pyridoxal 5'-phosphate as a cofactor.

The enzyme catalyses (1S,2R)-1-C-(indol-3-yl)glycerol 3-phosphate + L-serine = D-glyceraldehyde 3-phosphate + L-tryptophan + H2O. The protein operates within amino-acid biosynthesis; L-tryptophan biosynthesis; L-tryptophan from chorismate: step 5/5. Its function is as follows. The beta subunit is responsible for the synthesis of L-tryptophan from indole and L-serine. This chain is Tryptophan synthase beta chain (trpB), found in Buchnera aphidicola subsp. Rhopalosiphum padi.